The primary structure comprises 156 residues: Small ribosomal subunit protein uS7 (156 aa).

The protein belongs to the universal ribosomal protein uS7 family. Part of the 30S ribosomal subunit. Contacts proteins S9 and S11.

One of the primary rRNA binding proteins, it binds directly to 16S rRNA where it nucleates assembly of the head domain of the 30S subunit. Is located at the subunit interface close to the decoding center, probably blocks exit of the E-site tRNA. This is Small ribosomal subunit protein uS7 from Desulfovibrio desulfuricans (strain ATCC 27774 / DSM 6949 / MB).